Reading from the N-terminus, the 853-residue chain is Leucine--tRNA ligase (853 aa).

The 'HIGH' region motif lies at proline 42–histidine 52. The 'KMSKS' region motif lies at lysine 615–serine 619. Lysine 618 serves as a coordination point for ATP.

The protein belongs to the class-I aminoacyl-tRNA synthetase family.

It localises to the cytoplasm. The enzyme catalyses tRNA(Leu) + L-leucine + ATP = L-leucyl-tRNA(Leu) + AMP + diphosphate. In Crocosphaera subtropica (strain ATCC 51142 / BH68) (Cyanothece sp. (strain ATCC 51142)), this protein is Leucine--tRNA ligase.